Consider the following 331-residue polypeptide: Phosphoenolpyruvate transferase (331 aa).

Position 63 (D63) interacts with 7,8-didemethyl-8-hydroxy-5-deazariboflavin.

It belongs to the CofD family. In terms of assembly, homodimer. Mg(2+) serves as cofactor.

The enzyme catalyses enolpyruvoyl-2-diphospho-5'-guanosine + 7,8-didemethyl-8-hydroxy-5-deazariboflavin = dehydro coenzyme F420-0 + GMP + H(+). The protein operates within cofactor biosynthesis; coenzyme F420 biosynthesis. Its function is as follows. Catalyzes the transfer of the phosphoenolpyruvate moiety from enoylpyruvoyl-2-diphospho-5'-guanosine (EPPG) to 7,8-didemethyl-8-hydroxy-5-deazariboflavin (FO) with the formation of dehydro coenzyme F420-0 and GMP. This is Phosphoenolpyruvate transferase from Mycobacterium sp. (strain KMS).